The following is a 492-amino-acid chain: Catalase isozyme 1 (492 aa).

Residues H65 and N138 contribute to the active site. Residue Y348 participates in heme binding.

It belongs to the catalase family. Homotetramer. Heme is required as a cofactor. In whole endosperms (aleurones plus starchy endosperm), in isolated aleurones and in developing seeds.

It is found in the peroxisome. It localises to the glyoxysome. The catalysed reaction is 2 H2O2 = O2 + 2 H2O. In terms of biological role, occurs in almost all aerobically respiring organisms and serves to protect cells from the toxic effects of hydrogen peroxide. This is Catalase isozyme 1 (CAT1) from Hordeum vulgare (Barley).